We begin with the raw amino-acid sequence, 351 residues long: Cytoplasmic dynein 2 light intermediate chain 1 (351 aa).

Residues 304 to 351 (TLKDVKDPAKDPQYAESEVDEMRIQKDQELEQYKRSSSKSWKQIELDS) form a disordered region. A compositionally biased stretch (basic and acidic residues) spans 323–337 (DEMRIQKDQELEQYK).

The protein belongs to the dynein light intermediate chain family. In terms of assembly, light intermediate chain of the cytoplasmic dynein complex 2, a multisubunit complex composed at least of eleven different proteins. The cytoplasmic dynein 2 complex consists of two catalytic heavy chains (HCs) and a number of non-catalytic subunits presented by intermediate chains (ICs), light intermediate chains (LICs) and light chains (LCs). Among them, a heavy chain (DYNC2H1), two intermediate chains (DYNC2I2 and DYNC2I1), a light intermediate chain (DYNC2LI1), and a light chain (DYNLT2B) are unique to the dynein-2 complex, but a subset of light chains are also shared by dynein-1 and dynein-2 complexes. Dynein-2 complex is built around two copies of cytoplasmic dynein 2 heavy chain 1 (DYNC2H1). The C-terminal region forms the motor domain, which converts the energy from ATP hydrolysis into movement. Its N-terminal region forms the tail, an extended structure that binds the other subunits and holds the two heavy chains in a homodimer. Interacts with DYNC2H1 (via N-terminus); this interaction stabilizes the dynein-2 complex structure.

It is found in the cytoplasm. Its subcellular location is the cell projection. The protein resides in the cilium. The protein localises to the cytoskeleton. It localises to the cilium basal body. It is found in the cilium axoneme. Its subcellular location is the microtubule organizing center. The protein resides in the centrosome. Acts as one of several non-catalytic accessory components of the cytoplasmic dynein 2 complex (dynein-2 complex), a motor protein complex that drives the movement of cargos along microtubules within cilia and flagella in concert with the intraflagellar transport (IFT) system, facilitating the assembly of these organelles. Involved in the regulation of ciliary length. The protein is Cytoplasmic dynein 2 light intermediate chain 1 (DYNC2LI1) of Bos taurus (Bovine).